Here is a 234-residue protein sequence, read N- to C-terminus: MKMTAIAKASLALGILATGTITSLHQTVNASEHKAKYENVTKDIFDLRDYYSGASKELKNVTGYRYSKGGKHYLIFDKNRKFTRVQIFGKDIERFKARKNPGLDIFVVKEAENRNGTVFSYGGVTKKNQDAYYDYINAPRFQIKRDEGDGIATYGRVHYIYKEEISLKELDFKLRQYLIQNFDLYKKFPKDSKIKVIMKDGGYYTFELNKKLQTNRMSDVIDGRNIEKIEANIR.

The N-terminal stretch at 1 to 30 (MKMTAIAKASLALGILATGTITSLHQTVNA) is a signal peptide.

It belongs to the staphylococcal/streptococcal toxin family. In terms of assembly, interacts with host SELPLG; this interaction prevents SELPLG-mediated neutrophil rolling. Interacts with host MMP9 (via sialic acid-containing O-glycans); this interaction inhibits MMP9 activity. Interacts with host GP1BA and GP6; these interactions play an important role in platelet binding and activation.

Secreted protein that plays a role in the inhibition of host innate immune system. Modulates the interaction between host SELPLG and P-selectin thereby preventing initial rolling of neutrophils toward the site of infection. Interferes with leukocyte trafficking by inhibiting host metalloproteinase-9/MMP9 activity. Also associates with two different platelet surface receptors GP1A and GP6 leading to platelet activation and aggregation. The polypeptide is Staphylococcal superantigen-like 5 (Staphylococcus aureus (strain NCTC 8325 / PS 47)).